The following is a 382-amino-acid chain: uncharacterized protein (382 aa).

12 helical membrane passes run V8–L28, M45–I65, Y75–W95, F102–S122, L131–S151, L157–F177, L204–P224, G231–G251, V270–P290, A291–C311, A325–M345, and S349–L369.

The protein belongs to the major facilitator superfamily. YcaD (TC 2.A.1.26) family.

The protein resides in the cell inner membrane. This is an uncharacterized protein from Salmonella newport (strain SL254).